The chain runs to 286 residues: MAGAKEIRSKIASIKSTQKITSAMEKVAVSKMRRAQLRMAASRPYAERIRQVIGHLANANPEYRHPFMIERPVKRAGYIVVSSDRGLCGGLNTNLFKALVKDMNENREQGVEIDLCVIGSKGATFFRIFGGNVVAAISHLGEEPSINDLIGSVKVMLDAYLDGRIDRLSVVSNKFINTMTQKPTVEQLVPLVATPDQDLKHHWDYLYEPDAKELLDGLMVRYVESQVYQAVVENNAAEQAARMIAMKNATDNAGDLIKELQLIYNKARQAAITQEISEIVGGAAAV.

This sequence belongs to the ATPase gamma chain family. F-type ATPases have 2 components, CF(1) - the catalytic core - and CF(0) - the membrane proton channel. CF(1) has five subunits: alpha(3), beta(3), gamma(1), delta(1), epsilon(1). CF(0) has three main subunits: a, b and c.

The protein localises to the cell inner membrane. Functionally, produces ATP from ADP in the presence of a proton gradient across the membrane. The gamma chain is believed to be important in regulating ATPase activity and the flow of protons through the CF(0) complex. The chain is ATP synthase gamma chain from Pseudomonas putida (strain GB-1).